The chain runs to 894 residues: Valine--tRNA ligase (894 aa).

A compositionally biased stretch (polar residues) spans Met1–Gln22. A disordered region spans residues Met1–Tyr28. The short motif at Pro69–His79 is the 'HIGH' region element. The short motif at Lys554 to Ser558 is the 'KMSKS' region element. Lys557 is an ATP binding site. Residues Ile832–Gly894 adopt a coiled-coil conformation.

The protein belongs to the class-I aminoacyl-tRNA synthetase family. ValS type 1 subfamily. As to quaternary structure, monomer.

The protein resides in the cytoplasm. It catalyses the reaction tRNA(Val) + L-valine + ATP = L-valyl-tRNA(Val) + AMP + diphosphate. Catalyzes the attachment of valine to tRNA(Val). As ValRS can inadvertently accommodate and process structurally similar amino acids such as threonine, to avoid such errors, it has a 'posttransfer' editing activity that hydrolyzes mischarged Thr-tRNA(Val) in a tRNA-dependent manner. The chain is Valine--tRNA ligase from Wolinella succinogenes (strain ATCC 29543 / DSM 1740 / CCUG 13145 / JCM 31913 / LMG 7466 / NCTC 11488 / FDC 602W) (Vibrio succinogenes).